The primary structure comprises 306 residues: Curved DNA-binding protein (306 aa).

Residues 5–69 (DYYAIMGVKP…QRRAEYDQMW (65 aa)) form the J domain.

The protein localises to the cytoplasm. It localises to the nucleoid. DNA-binding protein that preferentially recognizes a curved DNA sequence. It is probably a functional analog of DnaJ; displays overlapping activities with DnaJ, but functions under different conditions, probably acting as a molecular chaperone in an adaptive response to environmental stresses other than heat shock. Lacks autonomous chaperone activity; binds native substrates and targets them for recognition by DnaK. Its activity is inhibited by the binding of CbpM. The sequence is that of Curved DNA-binding protein from Shigella dysenteriae serotype 1 (strain Sd197).